The following is a 155-amino-acid chain: RNA pyrophosphohydrolase (155 aa).

Positions 6-148 constitute a Nudix hydrolase domain; it reads GYRANVAIVL…KQEVYRKALT (143 aa). Positions 38-59 match the Nudix box motif; it reads GGVATGETPLQAMYRELHEEIG.

The protein belongs to the Nudix hydrolase family. RppH subfamily. The cofactor is a divalent metal cation.

In terms of biological role, accelerates the degradation of transcripts by removing pyrophosphate from the 5'-end of triphosphorylated RNA, leading to a more labile monophosphorylated state that can stimulate subsequent ribonuclease cleavage. The protein is RNA pyrophosphohydrolase of Francisella tularensis subsp. tularensis (strain FSC 198).